A 92-amino-acid chain; its full sequence is Acylphosphatase (92 aa).

A disulfide bridge connects residues C5 and C49. The Acylphosphatase-like domain occupies C5–R92. Active-site residues include R20 and N38.

The protein belongs to the acylphosphatase family.

It carries out the reaction an acyl phosphate + H2O = a carboxylate + phosphate + H(+). This is Acylphosphatase from Escherichia coli O6:H1 (strain CFT073 / ATCC 700928 / UPEC).